The following is a 211-amino-acid chain: B3 domain-containing protein At5g42700 (211 aa).

The TF-B3 DNA-binding region spans 110–201 (FVKSMLQSHV…AFKVYITRVG (92 aa)).

It is found in the nucleus. The polypeptide is B3 domain-containing protein At5g42700 (Arabidopsis thaliana (Mouse-ear cress)).